Consider the following 87-residue polypeptide: HssA/B-like protein 31 (87 aa).

The protein belongs to the hssA/B family.

The sequence is that of HssA/B-like protein 31 (hssl31) from Dictyostelium discoideum (Social amoeba).